We begin with the raw amino-acid sequence, 299 residues long: Nicotinate-nucleotide pyrophosphorylase [carboxylating] (299 aa).

Residues 8 to 12 (LLLPP) are important for hexamer formation. Quinolinate is bound by residues R102, 138 to 139 (RK), 160 to 161 (HR), K171, E201, D222, 248 to 250 (SGG), and G270.

It belongs to the NadC/ModD family. Hexamer formed by 3 homodimers.

The enzyme catalyses nicotinate beta-D-ribonucleotide + CO2 + diphosphate = quinolinate + 5-phospho-alpha-D-ribose 1-diphosphate + 2 H(+). It functions in the pathway cofactor biosynthesis; NAD(+) biosynthesis; nicotinate D-ribonucleotide from quinolinate: step 1/1. Involved in the catabolism of quinolinic acid (QA). This Sus scrofa (Pig) protein is Nicotinate-nucleotide pyrophosphorylase [carboxylating].